The sequence spans 601 residues: DNA ligase (601 aa).

Residue D258 participates in ATP binding. Residue K260 is the N6-AMP-lysine intermediate of the active site. ATP contacts are provided by R265, R280, E310, F350, R427, and K433. A disordered region spans residues 568–601 (DKSPEDATTTDEILEMYNKQPKKKIESPPIDESV).

This sequence belongs to the ATP-dependent DNA ligase family. It depends on Mg(2+) as a cofactor.

It catalyses the reaction ATP + (deoxyribonucleotide)n-3'-hydroxyl + 5'-phospho-(deoxyribonucleotide)m = (deoxyribonucleotide)n+m + AMP + diphosphate.. Functionally, DNA ligase that seals nicks in double-stranded DNA during DNA replication, DNA recombination and DNA repair. This is DNA ligase from Saccharolobus islandicus (strain Y.G.57.14 / Yellowstone #1) (Sulfolobus islandicus).